A 364-amino-acid polypeptide reads, in one-letter code: Membrane-bound lytic murein transglycosylase C (364 aa).

The signal sequence occupies residues 1-19; sequence MNKYKKFLPLLVLIPFLAS. Cys20 carries the N-palmitoyl cysteine lipid modification. Cys20 carries the S-diacylglycerol cysteine lipid modification.

The protein belongs to the transglycosylase Slt family.

It localises to the cell outer membrane. It catalyses the reaction Exolytic cleavage of the (1-&gt;4)-beta-glycosidic linkage between N-acetylmuramic acid (MurNAc) and N-acetylglucosamine (GlcNAc) residues in peptidoglycan, from either the reducing or the non-reducing ends of the peptidoglycan chains, with concomitant formation of a 1,6-anhydrobond in the MurNAc residue.. Functionally, murein-degrading enzyme. May play a role in recycling of muropeptides during cell elongation and/or cell division. In Glaesserella parasuis serovar 5 (strain SH0165) (Haemophilus parasuis), this protein is Membrane-bound lytic murein transglycosylase C.